The primary structure comprises 279 residues: Putative cysteine-rich repeat secretory protein 22 (279 aa).

The first 31 residues, 1 to 31 (MSSSSASKLLGSVLVFAMISVQIVFIHCVMS), serve as a signal peptide directing secretion. Gnk2-homologous domains lie at 44 to 146 (YLHH…PINS) and 152 to 276 (YEYN…LYRF).

The protein belongs to the cysteine-rich repeat secretory protein family.

It is found in the secreted. The polypeptide is Putative cysteine-rich repeat secretory protein 22 (CRRSP22) (Arabidopsis thaliana (Mouse-ear cress)).